A 689-amino-acid polypeptide reads, in one-letter code: DNA topoisomerase 1 (689 aa).

Residues 3–113 (DNLVIVESPA…KENRVVFNEI (111 aa)) enclose the Toprim domain. Residues E9 and D82 each coordinate Mg(2+). One can recognise a Topo IA-type catalytic domain in the interval 129 to 557 (EMNLVDAQQA…FFSSFKQDVE (429 aa)). Residues 163 to 168 (SAGRVQ) form an interaction with DNA region. Y298 functions as the O-(5'-phospho-DNA)-tyrosine intermediate in the catalytic mechanism. Residues 328 to 357 (SKRKASGKQGDQDAHEAIRPSSTMRTPDDM) form a disordered region. 3 C4-type zinc fingers span residues 577 to 603 (CEVCGSPMVIKMGRYGKFMACSNFPDC), 617 to 645 (CPKCNDGDVVERKSKKNRVFYGCSKYPEC), and 658 to 681 (CPKCNQYLVENKKGKTTQVICSNC).

This sequence belongs to the type IA topoisomerase family. As to quaternary structure, monomer. Mg(2+) is required as a cofactor.

The catalysed reaction is ATP-independent breakage of single-stranded DNA, followed by passage and rejoining.. Its function is as follows. Releases the supercoiling and torsional tension of DNA, which is introduced during the DNA replication and transcription, by transiently cleaving and rejoining one strand of the DNA duplex. Introduces a single-strand break via transesterification at a target site in duplex DNA. The scissile phosphodiester is attacked by the catalytic tyrosine of the enzyme, resulting in the formation of a DNA-(5'-phosphotyrosyl)-enzyme intermediate and the expulsion of a 3'-OH DNA strand. The free DNA strand then undergoes passage around the unbroken strand, thus removing DNA supercoils. Finally, in the religation step, the DNA 3'-OH attacks the covalent intermediate to expel the active-site tyrosine and restore the DNA phosphodiester backbone. In Staphylococcus aureus (strain N315), this protein is DNA topoisomerase 1.